The chain runs to 173 residues: Dual-action ribosomal maturation protein DarP (173 aa).

The protein belongs to the DarP family.

It localises to the cytoplasm. Functionally, member of a network of 50S ribosomal subunit biogenesis factors which assembles along the 30S-50S interface, preventing incorrect 23S rRNA structures from forming. Promotes peptidyl transferase center (PTC) maturation. This chain is Dual-action ribosomal maturation protein DarP, found in Pseudomonas fluorescens (strain ATCC BAA-477 / NRRL B-23932 / Pf-5).